The primary structure comprises 264 residues: Stress response regulator protein 1 (264 aa).

The tract at residues 50–74 (IYSDCDNNKNNNDDDDDDDDYNKDT) is disordered. Over residues 62-74 (DDDDDDDDYNKDT) the composition is skewed to acidic residues. The 119-residue stretch at 138–256 (RFLIVDDNII…LDLIGGSIDD (119 aa)) folds into the Response regulatory domain. Aspartate 189 bears the 4-aspartylphosphate mark.

Its function is as follows. Required for stress adaptation, morphogenesis and virulence. The chain is Stress response regulator protein 1 (SRR1) from Candida tropicalis (strain ATCC MYA-3404 / T1) (Yeast).